The sequence spans 360 residues: POU domain, class 5, transcription factor 1 (360 aa).

2 disordered regions span residues 1–53 and 87–117; these read MAGH…GVGP and QGGL…PCTV. The 9aaTAD signature appears at 4–12; that stretch reads HLASDFAFS. Over residues 17 to 26 the composition is skewed to gly residues; that stretch reads GGGDGPGGPE. At S111 the chain carries Phosphoserine; by MAPK. Residue K123 forms a Glycyl lysine isopeptide (Lys-Gly) (interchain with G-Cter in SUMO) linkage. A POU-specific domain is found at 138-212; it reads DIKALQKELE…LLQKWVEEAD (75 aa). DNA contacts are provided by R157 and Q164. 2 DNA-binding regions span residues 180 to 186 and 193 to 196; these read SQTTICR and SFKN. The segment at residues 230-289 is a DNA-binding region (homeobox); sequence RKRKRTSIENRVRGSLENLFLQCPKPTLQQISHIAQQLGLEKDVVRVWFCNRRQKGKRSS. T235 bears the Phosphothreonine mark. A phosphoserine mark is found at S236, S289, S290, and S355.

This sequence belongs to the POU transcription factor family. Class-5 subfamily. As to quaternary structure, interacts with PKM. Interacts with WWP2. Interacts with UBE2I and ZSCAN10. Interacts with PCGF1. Interacts with ESRRB; recruits ESRRB near the POU5F1-SOX2 element in the NANOG proximal promoter; the interaction is DNA independent. Interacts with ZNF322. Interacts with MAPK8 and MAPK9; the interaction allows MAPK8 and MAPK9 to phosphorylate POU5F1 on Ser-355. Interacts (when phosphorylated on Ser-355) with FBXW8. Interacts with FBXW4. Interacts with SOX2 and SOX15; binds synergistically with either SOX2 or SOX15 to DNA. Interacts with DDX56. In terms of processing, sumoylation enhances the protein stability, DNA binding and transactivation activity. Sumoylation is required for enhanced YES1 expression. Ubiquitinated; undergoes 'Lys-63'-linked polyubiquitination by WWP2 leading to proteasomal degradation. Post-translationally, ERK1/2-mediated phosphorylation at Ser-111 promotes nuclear exclusion and proteasomal degradation. Phosphorylation at Thr-235 and Ser-236 decrease DNA-binding and alters ability to activate transcription.

The protein localises to the cytoplasm. It localises to the nucleus. Transcription factor that binds to the octamer motif (5'-ATTTGCAT-3'). Forms a trimeric complex with SOX2 or SOX15 on DNA and controls the expression of a number of genes involved in embryonic development such as YES1, FGF4, UTF1 and ZFP206. Critical for early embryogenesis and for embryonic stem cell pluripotency. This is POU domain, class 5, transcription factor 1 (POU5F1) from Macaca mulatta (Rhesus macaque).